The following is a 217-amino-acid chain: 3,4-dihydroxy-2-butanone 4-phosphate synthase (217 aa).

D-ribulose 5-phosphate contacts are provided by residues 37-38, aspartate 42, 150-154, and glutamate 174; these read RE and RRGHT. Residue glutamate 38 coordinates Mg(2+). Histidine 153 contacts Mg(2+).

Belongs to the DHBP synthase family. As to quaternary structure, homodimer. Mg(2+) serves as cofactor. Mn(2+) is required as a cofactor.

It carries out the reaction D-ribulose 5-phosphate = (2S)-2-hydroxy-3-oxobutyl phosphate + formate + H(+). It functions in the pathway cofactor biosynthesis; riboflavin biosynthesis; 2-hydroxy-3-oxobutyl phosphate from D-ribulose 5-phosphate: step 1/1. Catalyzes the conversion of D-ribulose 5-phosphate to formate and 3,4-dihydroxy-2-butanone 4-phosphate. This Yersinia pseudotuberculosis serotype O:1b (strain IP 31758) protein is 3,4-dihydroxy-2-butanone 4-phosphate synthase.